A 511-amino-acid chain; its full sequence is Chromosomal replication initiator protein DnaA (511 aa).

Positions 1–90 (MSVELWQQCV…RRSSAPRAAP (90 aa)) are domain I, interacts with DnaA modulators. The interval 91–174 (NAPVSAAMAA…QVEGALKHTS (84 aa)) is domain II. Residues 125-161 (TAEPAQASDMAEASSRDSYDSMADSAPAPVAPGRTEQ) form a disordered region. The segment at 175 to 391 (YLNRTFTFET…GALKRVIAHS (217 aa)) is domain III, AAA+ region. Residues Gly-219, Gly-221, Lys-222, and Thr-223 each contribute to the ATP site. The domain IV, binds dsDNA stretch occupies residues 392 to 511 (HFMGRDITIE…YKNLLRTLTT (120 aa)).

This sequence belongs to the DnaA family. Oligomerizes as a right-handed, spiral filament on DNA at oriC.

It is found in the cytoplasm. In terms of biological role, plays an essential role in the initiation and regulation of chromosomal replication. ATP-DnaA binds to the origin of replication (oriC) to initiate formation of the DNA replication initiation complex once per cell cycle. Binds the DnaA box (a 9 base pair repeat at the origin) and separates the double-stranded (ds)DNA. Forms a right-handed helical filament on oriC DNA; dsDNA binds to the exterior of the filament while single-stranded (ss)DNA is stabiized in the filament's interior. The ATP-DnaA-oriC complex binds and stabilizes one strand of the AT-rich DNA unwinding element (DUE), permitting loading of DNA polymerase. After initiation quickly degrades to an ADP-DnaA complex that is not apt for DNA replication. Binds acidic phospholipids. The sequence is that of Chromosomal replication initiator protein DnaA from Pseudomonas putida (strain W619).